The chain runs to 126 residues: MGKEKSPRRVADNEALSVGTQIRGSAQKLNLVAALIRGRKVEDAMNVLAFSKKAMAVDVRKVLASAVANAENNHNLDVDALVVKEASVGKSLSMKRWHARGRGKSTRIVKPFSRIRIVVREQEEEA.

The protein belongs to the universal ribosomal protein uL22 family. In terms of assembly, part of the 50S ribosomal subunit.

Functionally, this protein binds specifically to 23S rRNA; its binding is stimulated by other ribosomal proteins, e.g. L4, L17, and L20. It is important during the early stages of 50S assembly. It makes multiple contacts with different domains of the 23S rRNA in the assembled 50S subunit and ribosome. The globular domain of the protein is located near the polypeptide exit tunnel on the outside of the subunit, while an extended beta-hairpin is found that lines the wall of the exit tunnel in the center of the 70S ribosome. In Sphingopyxis alaskensis (strain DSM 13593 / LMG 18877 / RB2256) (Sphingomonas alaskensis), this protein is Large ribosomal subunit protein uL22.